Consider the following 503-residue polypeptide: Cytochrome P450 11B1, mitochondrial (503 aa).

The transit peptide at 1–24 (MALRAKAEVCMAVPWLSLQRAQAL) directs the protein to the mitochondrion. Cys450 contributes to the heme binding site.

This sequence belongs to the cytochrome P450 family. Requires heme as cofactor. Expressed in the zona fasciculata/reticularis of the adrenal cortex.

It is found in the mitochondrion inner membrane. The catalysed reaction is a steroid + 2 reduced [adrenodoxin] + O2 + 2 H(+) = an 11beta-hydroxysteroid + 2 oxidized [adrenodoxin] + H2O. It carries out the reaction 11-deoxycortisol + 2 reduced [adrenodoxin] + O2 + 2 H(+) = cortisol + 2 oxidized [adrenodoxin] + H2O. It catalyses the reaction 21-hydroxyprogesterone + 2 reduced [adrenodoxin] + O2 + 2 H(+) = corticosterone + 2 oxidized [adrenodoxin] + H2O. It participates in steroid biosynthesis; glucocorticoid biosynthesis. It functions in the pathway steroid hormone biosynthesis. A cytochrome P450 monooxygenase involved in the biosynthesis of adrenal corticoids. Catalyzes a variety of reactions that are essential for many species, including detoxification, defense, and the formation of endogenous chemicals like steroid hormones. Steroid 11beta, 18- and 19-hydroxylase with preferred regioselectivity at 11beta, then 18, and lastly 19. Catalyzes the hydroxylation of 11-deoxycortisol and 11-deoxycorticosterone (21-hydroxyprogesterone) at 11beta position, yielding cortisol or corticosterone, respectively, but cannot produce aldosterone. Mechanistically, uses molecular oxygen inserting one oxygen atom into a substrate for hydroxylation and reducing the second into a water molecule. Two electrons are provided by NADPH via a two-protein mitochondrial transfer system comprising flavoprotein FDXR (adrenodoxin/ferredoxin reductase) and nonheme iron-sulfur protein FDX1 or FDX2 (adrenodoxin/ferredoxin). Due to its lack of 18-oxidation activity, it is incapable of generating aldosterone. Could also be involved in the androgen metabolic pathway. The protein is Cytochrome P450 11B1, mitochondrial of Homo sapiens (Human).